The chain runs to 173 residues: Alpha-crystallin A chain (173 aa).

Met-1 carries the N-acetylmethionine modification. The segment at 1–63 (MDIAIQHPWF…RTVLDSGISE (63 aa)) is required for complex formation with BFSP1 and BFSP2. Gln-6 is modified (deamidated glutamine; partial). The residue at position 45 (Ser-45) is a Phosphoserine. The residue at position 50 (Gln-50) is a Deamidated glutamine; partial. Residues 52–162 (LFRTVLDSGI…GHSERAIPVS (111 aa)) form the sHSP domain. N6-acetyllysine occurs at positions 70 and 99. A Zn(2+)-binding site is contributed by His-100. Asn-101 carries the deamidated asparagine; partial modification. The Zn(2+) site is built by Glu-102 and His-107. Residue Ser-122 is modified to Phosphoserine. Asn-123 carries the deamidated asparagine; partial modification. Residues 144-173 (PKVPSGMDAGHSERAIPVSREEKPSSAPSS) are disordered. Over residues 153–167 (GHSERAIPVSREEKP) the composition is skewed to basic and acidic residues. His-154 lines the Zn(2+) pocket. Ser-162 carries an O-linked (GlcNAc) serine glycan.

This sequence belongs to the small heat shock protein (HSP20) family. Heteromer composed of three CRYAA and one CRYAB subunits. Inter-subunit bridging via zinc ions enhances stability, which is crucial as there is no protein turn over in the lens. Can also form homodimers and homotetramers (dimers of dimers) which serve as the building blocks of homooligomers. Within homooligomers, the zinc-binding motif is created from residues of 3 different molecules. His-100 and Glu-102 from one molecule are ligands of the zinc ion, and His-107 and His-154 residues from additional molecules complete the site with tetrahedral coordination geometry. Part of a complex required for lens intermediate filament formation composed of BFSP1, BFSP2 and CRYAA. Acetylation at Lys-70 may increase chaperone activity. In terms of processing, undergoes age-dependent proteolytical cleavage at the C-terminus.

The protein localises to the cytoplasm. The protein resides in the nucleus. Its function is as follows. Contributes to the transparency and refractive index of the lens. Acts as a chaperone, preventing aggregation of various proteins under a wide range of stress conditions. Required for the correct formation of lens intermediate filaments as part of a complex composed of BFSP1, BFSP2 and CRYAA. The chain is Alpha-crystallin A chain (CRYAA) from Melursus ursinus (Sloth bear).